The sequence spans 327 residues: Metaxin-1 homolog (327 aa).

The helical transmembrane segment at 281–301 (IVAGVGAVLAMGAFAAWRGIY) threads the bilayer.

It belongs to the metaxin family. As to quaternary structure, associates with the mitochondrial contact site and cristae organizing system (MICOS) complex (also known as MINOS or MitOS complex).

It localises to the mitochondrion outer membrane. In terms of biological role, involved in transport of proteins into the mitochondrion. Essential for embryonic development. The protein is Metaxin-1 homolog of Drosophila melanogaster (Fruit fly).